We begin with the raw amino-acid sequence, 71 residues long: Antitoxin ParD2 (71 aa).

Its function is as follows. Antitoxin component of a type II toxin-antitoxin (TA) system. This chain is Antitoxin ParD2 (parD2), found in Mycobacterium tuberculosis (strain CDC 1551 / Oshkosh).